A 500-amino-acid polypeptide reads, in one-letter code: Raftlin-2 (500 aa).

Gly2 carries N-myristoyl glycine lipidation. The S-palmitoyl cysteine moiety is linked to residue Cys3. Positions 203-236 (GHLSESGVEEEPQHESGQHQTERNSSPSYANPKR) are disordered. Over residues 213 to 224 (EPQHESGQHQTE) the composition is skewed to basic and acidic residues. Phosphoserine is present on Ser404. A disordered region spans residues 406 to 500 (AQTPERKGSR…EEGVTQVTCM (95 aa)). Thr408 carries the post-translational modification Phosphothreonine. Positions 409–424 (PERKGSRLLKGEDRNK) are enriched in basic and acidic residues. The segment covering 426–438 (SSRSLGLDTNASQ) has biased composition (polar residues). Residue Ser429 is modified to Phosphoserine. Over residues 467–478 (SDSFSGFSSSDS) the composition is skewed to low complexity.

The protein belongs to the raftlin family. As to expression, expressed in B-cells, heart, brain, spleen, large intestine and lung. Expressed in dendritic cells and macrophages.

The protein localises to the cell membrane. Functionally, upon bacterial lipopolysaccharide stimulation, mediates clathrin-dependent internalization of TLR4 in dendritic cells, resulting in activation of TICAM1-mediated signaling and subsequent IFNB1 production. May regulate B-cell antigen receptor-mediated signaling. This chain is Raftlin-2 (Rftn2), found in Mus musculus (Mouse).